Here is a 770-residue protein sequence, read N- to C-terminus: Transcription activator AMTR1 (770 aa).

The segment at residues 7 to 34 (CLTCRQRKLKCDEKKPVCRQCAKASREC) is a DNA-binding region (zn(2)-C6 fungal-type).

It localises to the nucleus. In terms of biological role, transcription factor that regulates the expression of the gene clusters that mediate the biosynthesis of AM-toxins, host-selective toxins (HSTs) causing Alternaria blotch on apple, a worldwide distributed disease. AM-toxins have two target sites for affecting susceptible apple cells; they cause invagination of the plasma membrane and electrolyte loss and chloroplast disorganization. The polypeptide is Transcription activator AMTR1 (Alternaria alternata (Alternaria rot fungus)).